The following is a 63-amino-acid chain: Antimicrobial peptide 2 (63 aa).

Positions 1 to 27 (MAKVPIAFLKFVIVLILFIAMSGMIEA) are cleaved as a signal peptide. Cystine bridges form between Cys28/Cys45, Cys35/Cys49, and Cys44/Cys60.

Belongs to the AMP family. Homodimer. In terms of tissue distribution, seed specific.

It is found in the secreted. Its function is as follows. Possesses antifungal activity and is also active on two tested Gram-positive bacteria but is non-toxic for Gram-negative bacteria and cultured human cells. This chain is Antimicrobial peptide 2 (AMP2), found in Mirabilis jalapa (Garden four-o'clock).